A 304-amino-acid chain; its full sequence is Glutamyl-Q tRNA(Asp) synthetase (304 aa).

Residues Arg14 to Ser18 and Glu50 each bind L-glutamate. The 'HIGH' region motif lies at Pro17–Ser27. Zn(2+) is bound by residues Cys106, Cys108, Tyr120, and Cys124. Positions 178 and 196 each coordinate L-glutamate. The 'KMSKS' region motif lies at Lys234–Gln238. Position 237 (Lys237) interacts with ATP.

This sequence belongs to the class-I aminoacyl-tRNA synthetase family. GluQ subfamily. It depends on Zn(2+) as a cofactor.

Its function is as follows. Catalyzes the tRNA-independent activation of glutamate in presence of ATP and the subsequent transfer of glutamate onto a tRNA(Asp). Glutamate is transferred on the 2-amino-5-(4,5-dihydroxy-2-cyclopenten-1-yl) moiety of the queuosine in the wobble position of the QUC anticodon. This is Glutamyl-Q tRNA(Asp) synthetase from Vibrio cholerae serotype O1 (strain ATCC 39315 / El Tor Inaba N16961).